We begin with the raw amino-acid sequence, 331 residues long: Probable allantoicase (331 aa).

Belongs to the allantoicase family.

It carries out the reaction allantoate + H2O = (S)-ureidoglycolate + urea. The protein operates within nitrogen metabolism; (S)-allantoin degradation; (S)-ureidoglycolate from allantoate (aminidohydrolase route): step 1/1. This is Probable allantoicase from Pseudomonas fluorescens (strain ATCC BAA-477 / NRRL B-23932 / Pf-5).